We begin with the raw amino-acid sequence, 437 residues long: Protein arginine methyltransferase NDUFAF7, mitochondrial (437 aa).

A mitochondrion-targeting transit peptide spans 1–42; the sequence is MSGLARLQRLQKFGFLMVSASANRPIQRYQCSRTEKPQKRTS.

This sequence belongs to the NDUFAF7 family.

The protein localises to the mitochondrion. It catalyses the reaction L-arginyl-[protein] + 2 S-adenosyl-L-methionine = N(omega),N(omega)'-dimethyl-L-arginyl-[protein] + 2 S-adenosyl-L-homocysteine + 2 H(+). Its function is as follows. Arginine methyltransferase involved in the assembly or stability of mitochondrial NADH:ubiquinone oxidoreductase complex (complex I). Acts by mediating symmetric dimethylation of 'Arg-118' of ndufs2 after it assembles into the complex I, stabilizing the early intermediate complex. This Xenopus laevis (African clawed frog) protein is Protein arginine methyltransferase NDUFAF7, mitochondrial.